Here is a 62-residue protein sequence, read N- to C-terminus: Conotoxin TsMLCL-02 (62 aa).

The first 19 residues, 1-19, serve as a signal peptide directing secretion; that stretch reads MLCLPVFIILLLLASPAAP. The propeptide occupies 20–54; the sequence is NPLERRIQSDLIRAALEDADMKTEKGILSSIMGTL.

It belongs to the conotoxin T superfamily. As to expression, expressed by the venom duct.

The protein resides in the secreted. The chain is Conotoxin TsMLCL-02 from Conus tessulatus (Tessellate cone).